The sequence spans 1608 residues: Adenylate cyclase type 10 (1608 aa).

2 consecutive Guanylate cyclase domains span residues 42–179 (VLMF…RLAQ) and 293–418 (TIVF…ARMM). Residues D47 and I48 each coordinate Mg(2+). 47–52 (DISGFT) lines the ATP pocket. K95 is a binding site for hydrogencarbonate. A Mg(2+)-binding site is contributed by D99. The ATP site is built by D99 and K144. Positions 167, 176, and 337 each coordinate hydrogencarbonate. ATP is bound by residues V406 and 412-416 (NIAAR).

This sequence belongs to the adenylyl cyclase class-4/guanylyl cyclase family. Mg(2+) is required as a cofactor. It depends on Mn(2+) as a cofactor. In terms of processing, cleavage may occur to generate the active 48 kDa form. Detected in testis (at protein level). Preferentially expressed in testis.

It localises to the cell membrane. The protein resides in the cytoplasm. The protein localises to the cytoskeleton. It is found in the perinuclear region. Its subcellular location is the nucleus. It localises to the cell projection. The protein resides in the cilium. The protein localises to the mitochondrion. It carries out the reaction ATP = 3',5'-cyclic AMP + diphosphate. With respect to regulation, activated by manganese or magnesium ions. In the presence of magnesium ions, the enzyme is activated by bicarbonate. Calcium mildly increases the enzyme activity, also in the presence of magnesium ions. In terms of biological role, catalyzes the formation of the signaling molecule cAMP. May function as sensor that mediates responses to changes in cellular bicarbonate and CO(2) levels. Has a critical role in mammalian spermatogenesis by producing the cAMP which regulates cAMP-responsive nuclear factors indispensable for sperm maturation in the epididymis. Induces capacitation, the maturational process that sperm undergo prior to fertilization. Involved in ciliary beat regulation. The protein is Adenylate cyclase type 10 (Adcy10) of Rattus norvegicus (Rat).